Reading from the N-terminus, the 375-residue chain is Lipid-A-disaccharide synthase (375 aa).

This sequence belongs to the LpxB family.

It carries out the reaction a lipid X + a UDP-2-N,3-O-bis[(3R)-3-hydroxyacyl]-alpha-D-glucosamine = a lipid A disaccharide + UDP + H(+). It functions in the pathway bacterial outer membrane biogenesis; LPS lipid A biosynthesis. In terms of biological role, condensation of UDP-2,3-diacylglucosamine and 2,3-diacylglucosamine-1-phosphate to form lipid A disaccharide, a precursor of lipid A, a phosphorylated glycolipid that anchors the lipopolysaccharide to the outer membrane of the cell. The chain is Lipid-A-disaccharide synthase from Pseudomonas entomophila (strain L48).